Reading from the N-terminus, the 136-residue chain is 1,4-dihydroxy-2-naphthoyl-CoA hydrolase (136 aa).

The active-site Nucleophile or proton acceptor is the glutamate 63. Residues glycine 82, 89–92 (HVRS), and 106–111 (HLGSRH) contribute to the substrate site.

It belongs to the thioesterase PaaI family. As to quaternary structure, homotetramer. Dimer of dimers.

The enzyme catalyses 1,4-dihydroxy-2-naphthoyl-CoA + H2O = 1,4-dihydroxy-2-naphthoate + CoA + H(+). The protein operates within quinol/quinone metabolism; 1,4-dihydroxy-2-naphthoate biosynthesis; 1,4-dihydroxy-2-naphthoate from chorismate: step 7/7. Its pathway is quinol/quinone metabolism; menaquinone biosynthesis. Catalyzes the hydrolysis of 1,4-dihydroxy-2-naphthoyl-CoA (DHNA-CoA) to 1,4-dihydroxy-2-naphthoate (DHNA). Also shows significant activity toward a wide range of acyl-CoA thioesters, and minimal activity toward benzoyl-holoEntB. This is 1,4-dihydroxy-2-naphthoyl-CoA hydrolase from Escherichia coli (strain K12).